The primary structure comprises 306 residues: Ribonuclease Z (306 aa).

Residues His63, His65, Asp67, His68, His142, Asp213, and His271 each contribute to the Zn(2+) site. Asp67 serves as the catalytic Proton acceptor.

This sequence belongs to the RNase Z family. In terms of assembly, homodimer. Zn(2+) serves as cofactor.

It carries out the reaction Endonucleolytic cleavage of RNA, removing extra 3' nucleotides from tRNA precursor, generating 3' termini of tRNAs. A 3'-hydroxy group is left at the tRNA terminus and a 5'-phosphoryl group is left at the trailer molecule.. Zinc phosphodiesterase, which displays some tRNA 3'-processing endonuclease activity. Probably involved in tRNA maturation, by removing a 3'-trailer from precursor tRNA. This chain is Ribonuclease Z, found in Oceanobacillus iheyensis (strain DSM 14371 / CIP 107618 / JCM 11309 / KCTC 3954 / HTE831).